The chain runs to 462 residues: Serine carboxypeptidase-like 28 (462 aa).

An N-terminal signal peptide occupies residues 1-26 (MMITKKLYQCMCLLCMVIALLDVVSS). N-linked (GlcNAc...) asparagine glycans are attached at residues Asn49 and Asn144. 3 disulfide bridges follow: Cys93/Cys342, Cys254/Cys266, and Cys290/Cys311. The active site involves Ser186. N-linked (GlcNAc...) asparagine glycosylation is present at Asn256. Asn334 carries N-linked (GlcNAc...) asparagine glycosylation. Active-site residues include Asp379 and His434. A glycan (N-linked (GlcNAc...) asparagine) is linked at Asn454.

It belongs to the peptidase S10 family. As to expression, expressed in seedlings, roots and senescent leaves.

Its subcellular location is the secreted. Its function is as follows. Probable carboxypeptidase. The sequence is that of Serine carboxypeptidase-like 28 (SCPL28) from Arabidopsis thaliana (Mouse-ear cress).